The following is a 403-amino-acid chain: MNTENPIEKPFRKTGDPVDLTSESPLHPRRKSRRIMVGPVPVGGGAPISVQSMTNTLTANVPATLQQIAELTAAGCDIVRVAVPSQDDADALPEICRKSPIPVIADIHFQSKYVFQAIDAGCAAVRVNPGNIRKFDEVGPDICKAATDAGISLRIGVNAGSLDKELYAKYGGPTPEALVASALKEAHMFEDVGFHDFKISVKHHDVITMVETYRLLASKGDWPLHLGVTEAGPAWQGTIKSCLAFGALLAEGIGDTIRVSLSAPPAEEVKVGCKLLEYMGLRPRKFDIISCPSCGRAQVDVIQLASAVTEGLKDVTAPIRVAVMGCIVNGPGEAREADLGVASGNGKGQIFIKGKVIKTVPEDQIVDTLLTIANDIAAQMEADGQVPVNSTGPVVVPIQHPGH.

Residues Met1–Asp16 show a composition bias toward basic and acidic residues. The tract at residues Met1–Lys31 is disordered. 4 residues coordinate [4Fe-4S] cluster: Cys291, Cys294, Cys326, and Glu333.

It belongs to the IspG family. The cofactor is [4Fe-4S] cluster.

It carries out the reaction (2E)-4-hydroxy-3-methylbut-2-enyl diphosphate + oxidized [flavodoxin] + H2O + 2 H(+) = 2-C-methyl-D-erythritol 2,4-cyclic diphosphate + reduced [flavodoxin]. Its pathway is isoprenoid biosynthesis; isopentenyl diphosphate biosynthesis via DXP pathway; isopentenyl diphosphate from 1-deoxy-D-xylulose 5-phosphate: step 5/6. Functionally, converts 2C-methyl-D-erythritol 2,4-cyclodiphosphate (ME-2,4cPP) into 1-hydroxy-2-methyl-2-(E)-butenyl 4-diphosphate. The chain is 4-hydroxy-3-methylbut-2-en-1-yl diphosphate synthase (flavodoxin) from Bifidobacterium longum (strain NCC 2705).